A 104-amino-acid chain; its full sequence is SOSS complex subunit C (104 aa).

Ala-2 is subject to N-acetylalanine. Residue Ser-50 is modified to Phosphoserine.

The protein belongs to the SOSS-C family. In terms of assembly, component of the SOSS complex, composed of SOSS-B (SOSS-B1/NABP2 or SOSS-B2/NABP1), SOSS-A/INTS3 and SOSS-C/INIP. SOSS complexes containing SOSS-B1/NABP2 are more abundant than complexes containing SOSS-B2/NABP1. Interacts with INTS3; the interaction is direct.

The protein localises to the nucleus. Component of the SOSS complex, a multiprotein complex that functions downstream of the MRN complex to promote DNA repair and G2/M checkpoint. The SOSS complex associates with single-stranded DNA at DNA lesions and influences diverse endpoints in the cellular DNA damage response including cell-cycle checkpoint activation, recombinational repair and maintenance of genomic stability. Required for efficient homologous recombination-dependent repair of double-strand breaks (DSBs) and ATM-dependent signaling pathways. This is SOSS complex subunit C (INIP) from Homo sapiens (Human).